Reading from the N-terminus, the 343-residue chain is 2-alkenal reductase (NADP(+)-dependent) (343 aa).

Substrate is bound by residues Y55 and Y80. NADP(+) is bound by residues 165–166, G186, K190, Y206, N230, C252, Y258, 282–284, and N332; these read AV and FLV.

The protein belongs to the NADP-dependent oxidoreductase L4BD family. In terms of assembly, homodimer.

It carries out the reaction an n-alkanal + NADP(+) = an alk-2-enal + NADPH + H(+). Functionally, reduces the C=C double bonds of alpha, beta unsaturated enones, but has no activity on enones with an endocyclic C=C double-bond. Shows a high specificity for NADPH as the hybrid donor. Substrates are 1-nitrocyclohexene, 2-methylpentenal, trans-cinnamaldehyde, methyl-trans-2-methylcinnamaldehyde, trans-2-nonenal and 1-octen-3-one. Reduced activity with aplha-methyl transcinnamaldehyde, 1-cyclohexene-1-carboxaldehyde, methyl crotonate, (R)-pulegone, and dimethyl itaconate and no activity with maleimides, citral, (5R)- or (5S)-carvone, (S)-perillyl alcohol, and substituted cyclohexenones and cyclopentenones. May also act as a allyl-alcohol dehydrogenase by catalyzing the dehydrogenation of secondary allylic alcohols rather than saturated secondary alcohols. Allyl-alcohol dehydrogenase is specific for the S-stereoisomer of the alcohols. The chain is 2-alkenal reductase (NADP(+)-dependent) (DBR) from Nicotiana tabacum (Common tobacco).